A 220-amino-acid chain; its full sequence is Zinc finger protein 36 (220 aa).

The C2H2-type 1 zinc-finger motif lies at 73–95; it reads FRCTVCGKAFASYQALGGHKSSH. The segment at 90-134 is disordered; that stretch reads GHKSSHRKPPSPGDHYGAAAAAQQLASAGDSKEDSASSAAGSTGP. Residues 107–117 show a composition bias toward low complexity; the sequence is AAAAAQQLASA. The C2H2-type 2 zinc finger occupies 135–157; sequence HRCTICRRSFATGQALGGHKRCH.

Its function is as follows. Probable transcription factor involved in abscisic acid (ABA) signaling. Required for the regulation of the cross-talk between NADPH oxidase, hydrogen peroxide and MAP kinase in ABA signaling. Regulates the expression of the NADPH oxidase genes RBOHB and RBOHE, and the MAPK genes MPK1, MPK4, MPK5, MPK7 and MPK14. Regulates ABA-induced hydrogen peroxide production and antioxidant defense. Required for tolerance to water stress and oxidative stress. The polypeptide is Zinc finger protein 36 (Oryza sativa subsp. japonica (Rice)).